Here is a 1282-residue protein sequence, read N- to C-terminus: Clustered mitochondria protein homolog (1282 aa).

Residues 1–43 (MEQNNGTTEHPKEVLDQTNPSNEVTGVPNGNHAEGEGDQNAGE) form a disordered region. One can recognise a Clu domain in the interval 341 to 585 (DITRPQENYL…RITPLDVLWY (245 aa)). 2 stretches are compositionally biased toward basic and acidic residues: residues 631-641 (EAEEKAEESKP) and 653-669 (ESEK…RVDI). 2 disordered regions span residues 631–669 (EAEE…RVDI) and 892–936 (RSQL…PAPA). A compositionally biased stretch (low complexity) spans 924–936 (QASPRPAQSPAPA). The stretch at 1003–1036 (AKLYHQLSMLYYQSDDKDAAVELARKAVIVTERT) is one TPR repeat. The segment at 1202 to 1282 (ANLPTRLGTK…SKQSTVKPSS (81 aa)) is disordered. Residues 1212-1223 (PQPQVGQTTSEM) show a composition bias toward polar residues. Over residues 1257–1272 (TKQKKRAAARNPKLRG) the composition is skewed to basic residues. The span at 1273–1282 (SKQSTVKPSS) shows a compositional bias: polar residues.

This sequence belongs to the CLU family. As to quaternary structure, may associate with the eukaryotic translation initiation factor 3 (eIF-3) complex.

The protein localises to the cytoplasm. Its function is as follows. mRNA-binding protein involved in proper cytoplasmic distribution of mitochondria. This is Clustered mitochondria protein homolog from Coccidioides immitis (strain RS) (Valley fever fungus).